Reading from the N-terminus, the 2057-residue chain is Protein TIC 214 (2057 aa).

Transmembrane regions (helical) follow at residues 13-33 (KIINSVLAAGLYYGFLSAFSI), 62-82 (LIMGQILLFISIYYKPFHIAL), 158-178 (LFVTSSFFAWFIGQILVCEFF), and 206-226 (SDYFHFFFVILFFMMSLHSFG). Residues 248 to 340 (LILKGTDEEE…RVIQEKERKS (93 aa)) are a coiled coil. Positions 288 to 302 (NHLKKKKDRQKKQGT) are enriched in basic residues. 5 disordered regions span residues 288–316 (NHLKKKKDRQKKQGTRGHSDKEFHSNSNT), 614–807 (ETHT…EEKG), 890–910 (DEQTKREEKPKRESKKKNDRV), 1597–1634 (EEEEINPEEEINPEEEINPEEEINPSSNQKTPIGTNND), and 1724–1817 (KKKN…KSLS). Composition is skewed to basic and acidic residues over residues 621 to 657 (ATDKETKPNASKETDTVNKETKPNASKETDTIDKETK) and 665 to 702 (NTVDKETKTNASKETDTVDKETKPNASKETDTIDKETK). A compositionally biased stretch (polar residues) spans 704–713 (NASKETNTVN). 2 stretches are compositionally biased toward basic and acidic residues: residues 714–807 (KETK…EEKG) and 891–900 (EQTKREEKPK). The span at 1597-1619 (EEEEINPEEEINPEEEINPEEEI) shows a compositional bias: acidic residues. A compositionally biased stretch (polar residues) spans 1622–1634 (SSNQKTPIGTNND). A compositionally biased stretch (basic and acidic residues) spans 1753–1817 (TNSEKKSKTN…ETDSEKKSLS (65 aa)).

It belongs to the TIC214 family. Part of the Tic complex.

Its subcellular location is the plastid. The protein localises to the chloroplast inner membrane. Its function is as follows. Involved in protein precursor import into chloroplasts. May be part of an intermediate translocation complex acting as a protein-conducting channel at the inner envelope. The chain is Protein TIC 214 from Ipomoea purpurea (Common morning glory).